We begin with the raw amino-acid sequence, 434 residues long: Glucose-6-phosphate 1-dehydrogenase (434 aa).

Residues 7–14 (GSSGDLAK), arginine 36, tyrosine 93, and lysine 112 each bind NADP(+). D-glucose 6-phosphate is bound by residues lysine 112, 137–141 (HYLLK), glutamate 175, and aspartate 193. The active-site Proton acceptor is the histidine 198. Residues lysine 280 and lysine 285 each coordinate D-glucose 6-phosphate. Residue arginine 286 participates in NADP(+) binding.

The protein belongs to the glucose-6-phosphate dehydrogenase family.

It carries out the reaction D-glucose 6-phosphate + NADP(+) = 6-phospho-D-glucono-1,5-lactone + NADPH + H(+). The protein operates within carbohydrate degradation; pentose phosphate pathway; D-ribulose 5-phosphate from D-glucose 6-phosphate (oxidative stage): step 1/3. Catalyzes the rate-limiting step of the oxidative pentose-phosphate pathway, which represents a route for the dissimilation of carbohydrates besides glycolysis. The main function of this enzyme is to provide reducing power (NADPH) and pentose phosphates for fatty acid and nucleic acid synthesis. The chain is Glucose-6-phosphate 1-dehydrogenase (ZWF1) from Encephalitozoon cuniculi (strain GB-M1) (Microsporidian parasite).